The following is a 481-amino-acid chain: NADH-quinone oxidoreductase subunit N (481 aa).

The next 14 membrane-spanning stretches (helical) occupy residues 11–31 (AIPE…DLFW), 38–58 (LAAV…VFEM), 69–89 (FVLD…VLMV), 107–127 (VFVL…GGSL), 128–148 (LSVY…VAFY), 162–182 (FVLG…LYGL), 203–223 (LVLV…LGAA), 237–257 (PTVV…ALII), 271–291 (WQQI…VIAI), 299–319 (MLAY…VAGT), 327–347 (FFYT…ILLV), 370–390 (YAFL…TVGF), 401–421 (VAAG…IGAF), and 457–477 (LALL…FYAM).

This sequence belongs to the complex I subunit 2 family. As to quaternary structure, NDH-1 is composed of 14 different subunits. Subunits NuoA, H, J, K, L, M, N constitute the membrane sector of the complex.

It localises to the cell inner membrane. The catalysed reaction is a quinone + NADH + 5 H(+)(in) = a quinol + NAD(+) + 4 H(+)(out). In terms of biological role, NDH-1 shuttles electrons from NADH, via FMN and iron-sulfur (Fe-S) centers, to quinones in the respiratory chain. The immediate electron acceptor for the enzyme in this species is believed to be ubiquinone. Couples the redox reaction to proton translocation (for every two electrons transferred, four hydrogen ions are translocated across the cytoplasmic membrane), and thus conserves the redox energy in a proton gradient. This Acidithiobacillus ferrooxidans (strain ATCC 23270 / DSM 14882 / CIP 104768 / NCIMB 8455) (Ferrobacillus ferrooxidans (strain ATCC 23270)) protein is NADH-quinone oxidoreductase subunit N.